Here is a 252-residue protein sequence, read N- to C-terminus: Triosephosphate isomerase (252 aa).

Residue 9 to 11 (NWK) participates in substrate binding. The Electrophile role is filled by His-96. Glu-166 acts as the Proton acceptor in catalysis. Substrate is bound by residues Gly-172, Ser-212, and 233–234 (GG).

This sequence belongs to the triosephosphate isomerase family. Homodimer.

Its subcellular location is the cytoplasm. It catalyses the reaction D-glyceraldehyde 3-phosphate = dihydroxyacetone phosphate. The protein operates within carbohydrate biosynthesis; gluconeogenesis. It functions in the pathway carbohydrate degradation; glycolysis; D-glyceraldehyde 3-phosphate from glycerone phosphate: step 1/1. In terms of biological role, involved in the gluconeogenesis. Catalyzes stereospecifically the conversion of dihydroxyacetone phosphate (DHAP) to D-glyceraldehyde-3-phosphate (G3P). The protein is Triosephosphate isomerase of Prosthecochloris aestuarii (strain DSM 271 / SK 413).